We begin with the raw amino-acid sequence, 382 residues long: D-alanine--D-alanine ligase (382 aa).

The 210-residue stretch at 139–348 (KRLMRDAGLP…PPALMDALIA (210 aa)) folds into the ATP-grasp domain. ATP is bound at residue 168–223 (EALESRTLFVKPANMGSSVGVSRVADAGQFDQALAHAFAYDEKILIERAVPRAREI). Mg(2+)-binding residues include aspartate 300, glutamate 315, and asparagine 317.

It belongs to the D-alanine--D-alanine ligase family. Mg(2+) serves as cofactor. Requires Mn(2+) as cofactor.

The protein resides in the cytoplasm. It catalyses the reaction 2 D-alanine + ATP = D-alanyl-D-alanine + ADP + phosphate + H(+). Its pathway is cell wall biogenesis; peptidoglycan biosynthesis. In terms of biological role, cell wall formation. The chain is D-alanine--D-alanine ligase from Methylobacterium sp. (strain 4-46).